The primary structure comprises 119 residues: Fluoride-specific ion channel FluC (119 aa).

4 helical membrane passes run 5–25, 30–50, 59–79, and 92–112; these read ILPL…LNLA, LSPA…IGIF, WKLL…GFSL, and SALA…WLGL. The Na(+) site is built by G69 and T72.

It belongs to the fluoride channel Fluc/FEX (TC 1.A.43) family.

The protein resides in the cell inner membrane. The enzyme catalyses fluoride(in) = fluoride(out). Its activity is regulated as follows. Na(+) is not transported, but it plays an essential structural role and its presence is essential for fluoride channel function. In terms of biological role, fluoride-specific ion channel. Important for reducing fluoride concentration in the cell, thus reducing its toxicity. The sequence is that of Fluoride-specific ion channel FluC from Neisseria gonorrhoeae (strain NCCP11945).